A 449-amino-acid polypeptide reads, in one-letter code: Required for meiotic nuclear division protein 1 homolog (449 aa).

The transit peptide at 1-16 (MPATLLRAVAGSHRVL) directs the protein to the mitochondrion.

The protein belongs to the RMD1/sif2 family. In terms of assembly, homooligomer.

It localises to the mitochondrion. Its function is as follows. Required for mitochondrial translation, possibly by coordinating the assembly or maintenance of the mitochondrial ribosome. This chain is Required for meiotic nuclear division protein 1 homolog (RMND1), found in Pongo abelii (Sumatran orangutan).